Here is a 436-residue protein sequence, read N- to C-terminus: UPF0597 protein YhaM (436 aa).

Belongs to the UPF0597 family.

The protein is UPF0597 protein YhaM of Salmonella paratyphi C (strain RKS4594).